Here is a 162-residue protein sequence, read N- to C-terminus: Peptidyl-prolyl cis-trans isomerase-like 1 (162 aa).

Positions 1-155 constitute a PPIase cyclophilin-type domain; that stretch reads MATDVTFDTS…DEVKILRAKV (155 aa).

This sequence belongs to the cyclophilin-type PPIase family. PPIL1 subfamily.

It carries out the reaction [protein]-peptidylproline (omega=180) = [protein]-peptidylproline (omega=0). Its function is as follows. PPIases accelerate the folding of proteins. It catalyzes the cis-trans isomerization of proline imidic peptide bonds in oligopeptides. This is Peptidyl-prolyl cis-trans isomerase-like 1 (cyp1) from Emericella nidulans (strain FGSC A4 / ATCC 38163 / CBS 112.46 / NRRL 194 / M139) (Aspergillus nidulans).